Reading from the N-terminus, the 365-residue chain is Patr class I histocompatibility antigen, A-108 alpha chain (365 aa).

The signal sequence occupies residues 1 to 24; that stretch reads MAVMPPRTLLLLLSGALALTQTWA. An alpha-1 region spans residues 25-114; sequence GSHSMRYFYT…LRGYYNQSED (90 aa). At 25-308 the chain is on the extracellular side; the sequence is GSHSMRYFYT…EPSSQPTIPI (284 aa). A glycan (N-linked (GlcNAc...) asparagine) is linked at Asn110. Residues 115–206 form an alpha-2 region; that stretch reads GSHTIQIMYG…ENGKETLQRT (92 aa). 2 cysteine pairs are disulfide-bonded: Cys125-Cys188 and Cys227-Cys283. Residues 207–298 are alpha-3; it reads DPPKTHMTHH…GLPKPLTLRW (92 aa). Residues 209 to 295 form the Ig-like C1-type domain; sequence PKTHMTHHPI…QHEGLPKPLT (87 aa). A connecting peptide region spans residues 299-308; sequence EPSSQPTIPI. The helical transmembrane segment at 309–332 threads the bilayer; it reads VGIIAGLVLLGAVITGAVVAAVMW. At 333-365 the chain is on the cytoplasmic side; sequence RRKSSDRKGGSYTQAASSDSAQGSDVSLTACKV. Residues 339 to 360 are disordered; it reads RKGGSYTQAASSDSAQGSDVSL. A Phosphoserine modification is found at Ser343. At Tyr344 the chain carries Phosphotyrosine. Residues 346–359 show a composition bias toward low complexity; the sequence is QAASSDSAQGSDVS. Ser349, Ser350, Ser352, Ser356, and Ser359 each carry phosphoserine.

The protein belongs to the MHC class I family. In terms of assembly, heterodimer of an alpha chain and a beta chain (beta-2-microglobulin).

The protein localises to the membrane. Involved in the presentation of foreign antigens to the immune system. The protein is Patr class I histocompatibility antigen, A-108 alpha chain (Patr-A) of Pan troglodytes (Chimpanzee).